The chain runs to 100 residues: Cell division protein DrpB (100 aa).

Residues 1–16 (MEYGSTKMEERLSRSP) lie on the Cytoplasmic side of the membrane. A helical transmembrane segment spans residues 17–37 (GGKLALWAFYTWCGYFVWAMA). Over 38 to 64 (RYIWVMSRIPDAPVSGFESDLGSTAGK) the chain is Periplasmic. Residues 65–85 (WLGALVGFLFMALVGALLGSI) traverse the membrane as a helical segment. Topologically, residues 86–100 (AWYTRPRPARSRRYE) are cytoplasmic.

The protein belongs to the DrpB family. As to quaternary structure, bacterial adenylate cyclase hybrid (BACTH) studies show interaction of this protein with DamX, FtsI, FtsN, FtsQ, YmgF, DedD, FtsA and MalF, as well as weaker interactions with DedD, MalG and PBP2, but this assay often generates false positive results.

Its subcellular location is the cell inner membrane. Functionally, a non-essential division protein that localizes to the septal ring in low ionic strength medium. Its function is as follows. Localizes to the septal ring in about 30% of observed cells before cell constriction occurs; localization occurs in low ionic strength medium (0 NaCl) and requires FtsZ but not FtsEX. Overexpression partially restores correct FtsI localization to the division septum in an ftsEX deletion. Isolated as a multicopy suppressor of an ftsEX deletion mutant; it does not suppress other cell division defects (e.g. ftsA, ftsI, ftsQ or ftsZ). This Escherichia coli (strain K12) protein is Cell division protein DrpB.